A 489-amino-acid polypeptide reads, in one-letter code: Glutamyl-tRNA(Gln) amidotransferase subunit A (489 aa).

Residues Lys-80 and Ser-160 each act as charge relay system in the active site. The active-site Acyl-ester intermediate is Ser-184.

Belongs to the amidase family. GatA subfamily. Heterotrimer of A, B and C subunits.

It catalyses the reaction L-glutamyl-tRNA(Gln) + L-glutamine + ATP + H2O = L-glutaminyl-tRNA(Gln) + L-glutamate + ADP + phosphate + H(+). Functionally, allows the formation of correctly charged Gln-tRNA(Gln) through the transamidation of misacylated Glu-tRNA(Gln) in organisms which lack glutaminyl-tRNA synthetase. The reaction takes place in the presence of glutamine and ATP through an activated gamma-phospho-Glu-tRNA(Gln). This Wolbachia pipientis wMel protein is Glutamyl-tRNA(Gln) amidotransferase subunit A.